Here is a 127-residue protein sequence, read N- to C-terminus: MGKARGVNSGGGESSLGYLFGSGESVPKPNKPNAKTGFTTTTTTTTTTDGAGGRPKTTTTTTTTGDKNKTEENSAGVRGSPNNYYRSDGQNCGNFLTERPSTKVHAAPGGGSSLGYLFGSGPCGSDK.

Positions 1–127 are disordered; the sequence is MGKARGVNSG…FGSGPCGSDK (127 aa). Over residues 39–48 the composition is skewed to low complexity; that stretch reads TTTTTTTTTT. Serine 80 carries the phosphoserine modification. Polar residues predominate over residues 80–94; the sequence is SPNNYYRSDGQNCGN.

Belongs to the SPIRAL1 family. Ubiquitous.

Its function is as follows. Acts redundantly with SPR1 in maintaining the cortical microtubules organization essential for anisotropic cell growth. This chain is Protein SPIRAL1-like 4 (SP1L4), found in Arabidopsis thaliana (Mouse-ear cress).